Reading from the N-terminus, the 349-residue chain is Protein POOR HOMOLOGOUS SYNAPSIS 1 (349 aa).

The protein resides in the cytoplasm. In terms of biological role, required for accurate chromosome segregation in meiosis. Required for pairing to occur between homologous chromosomes. Acts in early recombination steps and ensures pairing fidelity and proper repair of meiotic DNA double-strand-breaks. Regulates recombination and pairing of homologous chromosomes during meiotic prophase by controlling transport of RAD50 from cytoplasm to the nucleus. May affect pairing of the gene-rich fraction of the genome rather than preventing pairing between repetitive DNA elements. The sequence is that of Protein POOR HOMOLOGOUS SYNAPSIS 1 from Arabidopsis thaliana (Mouse-ear cress).